The primary structure comprises 90 residues: Barrier-to-autointegration factor B (90 aa).

The protein belongs to the BAF family. Homodimer. Interacts with nemp1a and nemp1b.

The protein localises to the nucleus. It localises to the chromosome. The protein resides in the nucleus envelope. Its subcellular location is the cytoplasm. In terms of biological role, non-specific DNA-binding protein that plays key roles in mitotic nuclear reassembly, chromatin organization, DNA damage response, gene expression and intrinsic immunity against foreign DNA. Contains two non-specific double-stranded DNA (dsDNA)-binding sites which promote DNA cross-bridging. Plays a key role in nuclear membrane reformation at the end of mitosis by driving formation of a single nucleus in a spindle-independent manner. Transiently cross-bridges anaphase chromosomes via its ability to bridge distant DNA sites, leading to the formation of a dense chromatin network at the chromosome ensemble surface that limits membranes to the surface. Also acts as a negative regulator of innate immune activation by restricting CGAS activity toward self-DNA upon acute loss of nuclear membrane integrity. Outcompetes CGAS for DNA-binding, thereby preventing CGAS activation and subsequent damaging autoinflammatory responses. Also involved in DNA damage response; acts by inhibiting the ADP-ribosyltransferase activity of PARP1. Involved in the recognition of exogenous dsDNA in the cytosol: associates with exogenous dsDNA immediately after its appearance in the cytosol at endosome breakdown and is required to avoid autophagy. The protein is Barrier-to-autointegration factor B (banf1-b) of Xenopus laevis (African clawed frog).